Consider the following 921-residue polypeptide: cGMP-dependent 3',5'-cyclic phosphodiesterase (921 aa).

At methionine 1 the chain carries N-acetylmethionine. Disordered stretches follow at residues 1-21 (MRRQ…PPGS) and 177-198 (ESSV…DQKG). Positions 177–188 (ESSVAPEATQNP) are enriched in polar residues. GAF domains follow at residues 220–357 (DASS…STVL) and 389–528 (DVSV…GISI). Serine 411, aspartate 426, isoleucine 445, tyrosine 468, and threonine 479 together coordinate 3',5'-cyclic GMP. Residues 558-882 (SDDEYTKLLH…EHWTKVSHKF (325 aa)) form the PDEase domain. Histidine 636 functions as the Proton donor in the catalytic mechanism. Positions 640, 676, 677, and 788 each coordinate Zn(2+). Mg(2+) is bound at residue aspartate 677.

The protein belongs to the cyclic nucleotide phosphodiesterase family. PDE2 subfamily. As to quaternary structure, homodimer. Requires Zn(2+) as cofactor. Mg(2+) is required as a cofactor.

The protein resides in the cell membrane. It is found in the cytoplasm. Its subcellular location is the mitochondrion. It localises to the mitochondrion inner membrane. The protein localises to the mitochondrion outer membrane. It catalyses the reaction a nucleoside 3',5'-cyclic phosphate + H2O = a nucleoside 5'-phosphate + H(+). It carries out the reaction 3',5'-cyclic GMP + H2O = GMP + H(+). The catalysed reaction is 3',5'-cyclic AMP + H2O = AMP + H(+). Its activity is regulated as follows. The 3',5'-cyclic-AMP phosphodiesterase activity is stimulated by 3',5'-cyclic GMP. Its function is as follows. cGMP-activated cyclic nucleotide phosphodiesterase with a dual-specificity for the second messengers cAMP and cGMP, which are key regulators of many important physiological processes. Has a higher efficiency with cGMP compared to cAMP. Plays a role in cell growth and migration. In terms of biological role, regulates mitochondrial cAMP levels and respiration. Involved in the regulation of mitochondria morphology/dynamics and apoptotic cell death via local modulation of cAMP/PKA signaling in the mitochondrion, including the monitoring of local cAMP levels at the outer mitochondrial membrane and of PKA-dependent phosphorylation of DNM1L. This chain is cGMP-dependent 3',5'-cyclic phosphodiesterase, found in Bos taurus (Bovine).